Consider the following 155-residue polypeptide: Large ribosomal subunit protein eL24 (155 aa).

The interval 87–155 (LELIKERRSQ…SFQKVKATSR (69 aa)) is disordered. The span at 89–129 (LIKERRSQKPSDRKAARDSKLAKDKEAKKAAKAARKAEKAK) shows a compositional bias: basic and acidic residues. Residues 130–143 (AVASGASVVSKQQA) are compositionally biased toward low complexity.

Belongs to the eukaryotic ribosomal protein eL24 family. As to quaternary structure, component of the large ribosomal subunit. Mature ribosomes consist of a small (40S) and a large (60S) subunit. The 40S subunit contains about 32 different proteins and 1 molecule of RNA (18S). The 60S subunit contains 45 different proteins and 3 molecules of RNA (25S, 5.8S and 5S).

The protein localises to the cytoplasm. In terms of biological role, component of the ribosome, a large ribonucleoprotein complex responsible for the synthesis of proteins in the cell. The small ribosomal subunit (SSU) binds messenger RNAs (mRNAs) and translates the encoded message by selecting cognate aminoacyl-transfer RNA (tRNA) molecules. The large subunit (LSU) contains the ribosomal catalytic site termed the peptidyl transferase center (PTC), which catalyzes the formation of peptide bonds, thereby polymerizing the amino acids delivered by tRNAs into a polypeptide chain. The nascent polypeptides leave the ribosome through a tunnel in the LSU and interact with protein factors that function in enzymatic processing, targeting, and the membrane insertion of nascent chains at the exit of the ribosomal tunnel. The chain is Large ribosomal subunit protein eL24 from Candida albicans (strain SC5314 / ATCC MYA-2876) (Yeast).